The primary structure comprises 1002 residues: UPF0182 protein Mvan_1814 (1002 aa).

Helical transmembrane passes span 16–36 (VMIAVALAVVVLLLLGPRLVD), 61–81 (LLLFLAVAVVFGAVVFAAMAL), 112–132 (LVGIGVPVAVGLLAGLIAQNY), 174–194 (FAATFLAFIANLLGHYLFGGI), 209–229 (IQLIALVGFLMLLKAVAYWLD), 258–278 (KLILMVIAVICAAAVFSAIVL), and 286–306 (IGVVLLLLSSLIVGAGWPLVV). Positions 891–958 (LFGPGADATA…TGPTQLSAGK (68 aa)) are disordered. Low complexity predominate over residues 893–923 (GPGADATATGPAATEPPAGQAPQPQGNNQPP). A compositionally biased stretch (pro residues) spans 937-950 (PQQPEVPVAVPPTG).

Belongs to the UPF0182 family.

The protein resides in the cell membrane. The protein is UPF0182 protein Mvan_1814 of Mycolicibacterium vanbaalenii (strain DSM 7251 / JCM 13017 / BCRC 16820 / KCTC 9966 / NRRL B-24157 / PYR-1) (Mycobacterium vanbaalenii).